Reading from the N-terminus, the 146-residue chain is MVSFSFPEIYDVSDDVLVSDSRRSVAVEVEEKVQVINVKVLRLIEAVDEDRVGVKVMFRLCYRYRRELKITLLGCKMELWTSLKSSGKYSVQSLLQRKLNGICVSNYCIGIDMFVSNVKELINRCKWITSVQGVNPICCLYHMDEE.

The protein belongs to the nanovirus U1 protein family.

In Subterranean clover stunt virus (strain F) (SCSV), this protein is Protein U1 (DNA-U1).